Here is a 709-residue protein sequence, read N- to C-terminus: Caprin-1 (709 aa).

Composition is skewed to low complexity over residues methionine 1–serine 15 and glycine 22–alanine 43. The segment at methionine 1–glutamine 50 is disordered. An N-acetylproline modification is found at proline 2. Proline 2 is modified (N-acetylalanine). Serine 10 carries the post-translational modification Phosphoserine. Residues valine 60–aspartate 94 are a coiled coil. Residue serine 115 is modified to Phosphoserine. Residues lysine 125–glutamine 153 are a coiled coil. An Omega-N-methylarginine modification is found at arginine 165. The disordered stretch occupies residues glutamate 260–serine 291. The span at glutamine 271 to serine 291 shows a compositional bias: acidic residues. Serine 335 and serine 343 each carry phosphoserine. The tract at residues glutamine 360 to glutamate 381 is G3BP1-binding. Disordered regions lie at residues leucine 417–glutamine 446, threonine 475–lysine 499, and alanine 524–asparagine 709. Residues proline 433–glutamine 446 are compositionally biased toward polar residues. Low complexity-rich tracts occupy residues glutamine 477–glutamine 491 and glutamine 537–valine 570. A compositionally biased stretch (polar residues) spans proline 577–tyrosine 605. The residue at position 625 (tyrosine 625) is a Phosphotyrosine; by EPHA4. Omega-N-methylarginine is present on residues arginine 626 and arginine 633. Tyrosine 636 and tyrosine 639 each carry phosphotyrosine; by EPHA4. Position 640 is an omega-N-methylarginine (arginine 640). Residues serine 642 to serine 657 show a composition bias toward polar residues. 2 O-linked (GlcNAc) serine glycosylation sites follow: serine 644 and serine 649. Residues tyrosine 651, tyrosine 662, tyrosine 665, and tyrosine 670 each carry the phosphotyrosine; by EPHA4 modification. Composition is skewed to low complexity over residues arginine 676–alanine 686 and asparagine 697–asparagine 709. The residue at position 698 (arginine 698) is an Asymmetric dimethylarginine; alternate. Omega-N-methylarginine; alternate is present on arginine 698.

Belongs to the caprin family. In terms of assembly, may form homomultimers. Interacts with G3BP1; interaction is direct and promotes stress granule formation. Interacts with G3BP2; interaction is direct and promotes stress granule formation. Interacts with PQBP1. Interacts with DDX3X. Interacts (when phosphorylated by EPHA4) with FMR1; interaction with FMR1 promotes formation of a membraneless compartment. (Microbial infection) Interacts with Zika virus capsid protein C; this interaction is probably linked to the inhibition of stress granules formation by the virus. As to quaternary structure, (Microbial infection) Interacts with rotavirus A non-structural protein 5; this interaction probably plays a role in the sequestration of CAPRIN1 in viral factories. In terms of assembly, (Microbial infection) Interacts with Japanese encephalitis virus capsid protein C; this interaction is involved in the suppression of the integrated stress response by the virus. Post-translationally, tyrosine phosphorylation by EPHA4 promotes interaction with FMR1 and liquid-liquid phase separation (LLPS) for the formation of a membraneless compartment that concentrates mRNAs with associated regulatory factors. O-glycosylated (O-GlcNAcylated), in a cell cycle-dependent manner. O-glycosylation by OGT inhibit ability to undergo liquid-liquid phase separation (LLPS). In terms of tissue distribution, ubiquitous.

The protein localises to the cytoplasm. It is found in the cytoplasmic ribonucleoprotein granule. The protein resides in the cytosol. It localises to the cell projection. Its subcellular location is the dendrite. The protein localises to the lamellipodium. Ability to mediate liquid-liquid phase separation is regulated by ATP: moderate concentrations of ATP enhance phase separation, whereas high concentrations of ATP lead to inhibition of phase separation. Functionally, mRNA-binding protein that acts as a regulator of mRNAs transport, translation and/or stability, and which is involved in neurogenesis, synaptic plasticity in neurons and cell proliferation and migration in multiple cell types. Plays an essential role in cytoplasmic stress granule formation. Acts as an mRNA regulator by mediating formation of some phase-separated membraneless compartment: undergoes liquid-liquid phase separation upon binding to target mRNAs, leading to assemble mRNAs into cytoplasmic ribonucleoprotein granules that concentrate mRNAs with associated regulatory factors. Undergoes liquid-liquid phase separation following phosphorylation and interaction with FMR1, promoting formation of cytoplasmic ribonucleoprotein granules that concentrate mRNAs with factors that inhibit translation and mediate deadenylation of target mRNAs. In these cytoplasmic ribonucleoprotein granules, CAPRIN1 mediates recruitment of CNOT7 deadenylase, leading to mRNA deadenylation and degradation. Binds directly and selectively to MYC and CCND2 mRNAs. In neuronal cells, directly binds to several mRNAs associated with RNA granules, including BDNF, CAMK2A, CREB1, MAP2, NTRK2 mRNAs, as well as to GRIN1 and KPNB1 mRNAs, but not to rRNAs. The sequence is that of Caprin-1 from Homo sapiens (Human).